A 362-amino-acid chain; its full sequence is Anthranilate phosphoribosyltransferase 2 (362 aa).

Residues G103, 106 to 107 (GD), T111, 113 to 116 (NIST), 131 to 139 (KHGNRSASS), and S143 each bind 5-phospho-alpha-D-ribose 1-diphosphate. G103 is a binding site for anthranilate. A Mg(2+)-binding site is contributed by S115. N134 contacts anthranilate. R189 serves as a coordination point for anthranilate. Positions 248 and 249 each coordinate Mg(2+).

This sequence belongs to the anthranilate phosphoribosyltransferase family. Homodimer. Requires Mg(2+) as cofactor.

It carries out the reaction N-(5-phospho-beta-D-ribosyl)anthranilate + diphosphate = 5-phospho-alpha-D-ribose 1-diphosphate + anthranilate. It participates in amino-acid biosynthesis; L-tryptophan biosynthesis; L-tryptophan from chorismate: step 2/5. Its function is as follows. Catalyzes the transfer of the phosphoribosyl group of 5-phosphorylribose-1-pyrophosphate (PRPP) to anthranilate to yield N-(5'-phosphoribosyl)-anthranilate (PRA). The sequence is that of Anthranilate phosphoribosyltransferase 2 from Nostoc sp. (strain PCC 7120 / SAG 25.82 / UTEX 2576).